The chain runs to 278 residues: Shikimate dehydrogenase (NADP(+)) (278 aa).

Residues 18 to 20 (SRS) and Thr65 each bind shikimate. Lys69 serves as the catalytic Proton acceptor. Glu80 contacts NADP(+). Residues Asn89 and Asp104 each contribute to the shikimate site. NADP(+) contacts are provided by residues 129–133 (GAGGS) and Leu218. Position 220 (Tyr220) interacts with shikimate. Gly241 contacts NADP(+).

This sequence belongs to the shikimate dehydrogenase family. As to quaternary structure, homodimer.

The enzyme catalyses shikimate + NADP(+) = 3-dehydroshikimate + NADPH + H(+). It functions in the pathway metabolic intermediate biosynthesis; chorismate biosynthesis; chorismate from D-erythrose 4-phosphate and phosphoenolpyruvate: step 4/7. Involved in the biosynthesis of the chorismate, which leads to the biosynthesis of aromatic amino acids. Catalyzes the reversible NADPH linked reduction of 3-dehydroshikimate (DHSA) to yield shikimate (SA). This Rhodopseudomonas palustris (strain ATCC BAA-98 / CGA009) protein is Shikimate dehydrogenase (NADP(+)).